The following is a 156-amino-acid chain: Small ribosomal subunit protein uS7 (156 aa).

This sequence belongs to the universal ribosomal protein uS7 family. In terms of assembly, part of the 30S ribosomal subunit. Contacts proteins S9 and S11.

In terms of biological role, one of the primary rRNA binding proteins, it binds directly to 16S rRNA where it nucleates assembly of the head domain of the 30S subunit. Is located at the subunit interface close to the decoding center, probably blocks exit of the E-site tRNA. This chain is Small ribosomal subunit protein uS7, found in Rubrobacter xylanophilus (strain DSM 9941 / JCM 11954 / NBRC 16129 / PRD-1).